The primary structure comprises 917 residues: Protein translocase subunit SecA (917 aa).

ATP contacts are provided by residues glutamine 87, 105–109, and aspartate 516; that span reads GEGKT. Residues cysteine 901, cysteine 903, cysteine 912, and histidine 913 each coordinate Zn(2+).

The protein belongs to the SecA family. As to quaternary structure, monomer and homodimer. Part of the essential Sec protein translocation apparatus which comprises SecA, SecYEG and auxiliary proteins SecDF-YajC and YidC. The cofactor is Zn(2+).

Its subcellular location is the cell inner membrane. It localises to the cytoplasm. The enzyme catalyses ATP + H2O + cellular proteinSide 1 = ADP + phosphate + cellular proteinSide 2.. Part of the Sec protein translocase complex. Interacts with the SecYEG preprotein conducting channel. Has a central role in coupling the hydrolysis of ATP to the transfer of proteins into and across the cell membrane, serving both as a receptor for the preprotein-SecB complex and as an ATP-driven molecular motor driving the stepwise translocation of polypeptide chains across the membrane. The sequence is that of Protein translocase subunit SecA from Acidovorax sp. (strain JS42).